The sequence spans 361 residues: Phospho-N-acetylmuramoyl-pentapeptide-transferase (361 aa).

The next 10 membrane-spanning stretches (helical) occupy residues 28–48 (LAVL…IKFL), 74–94 (TMGG…LADL), 99–119 (IWIT…DDYA), 135–155 (LLLQ…TIDS), 167–187 (SLSM…IVGA), 203–223 (VPIA…GNLI), 236–256 (TGEL…FLWF), 263–283 (VFMG…ISVI), 288–308 (IVLG…IMQV), and 338–358 (KVVI…LSSL).

Belongs to the glycosyltransferase 4 family. MraY subfamily. Mg(2+) serves as cofactor.

The protein resides in the cell inner membrane. It carries out the reaction UDP-N-acetyl-alpha-D-muramoyl-L-alanyl-gamma-D-glutamyl-meso-2,6-diaminopimeloyl-D-alanyl-D-alanine + di-trans,octa-cis-undecaprenyl phosphate = di-trans,octa-cis-undecaprenyl diphospho-N-acetyl-alpha-D-muramoyl-L-alanyl-D-glutamyl-meso-2,6-diaminopimeloyl-D-alanyl-D-alanine + UMP. It participates in cell wall biogenesis; peptidoglycan biosynthesis. Functionally, catalyzes the initial step of the lipid cycle reactions in the biosynthesis of the cell wall peptidoglycan: transfers peptidoglycan precursor phospho-MurNAc-pentapeptide from UDP-MurNAc-pentapeptide onto the lipid carrier undecaprenyl phosphate, yielding undecaprenyl-pyrophosphoryl-MurNAc-pentapeptide, known as lipid I. The sequence is that of Phospho-N-acetylmuramoyl-pentapeptide-transferase from Rickettsia bellii (strain RML369-C).